The following is a 213-amino-acid chain: uncharacterized protein (213 aa).

The segment covering 1–11 (MFATKDPEFEN) has biased composition (basic and acidic residues). Disordered regions lie at residues 1–21 (MFAT…SPRN) and 63–98 (LRNK…EQAW). Residues 12–21 (RINTNKSPRN) show a composition bias toward polar residues. Positions 63 to 93 (LRNKAPKNEETKHEEHTPDNHEETDHHEAKQ) are enriched in basic and acidic residues.

This is an uncharacterized protein from Escherichia coli (strain K12).